Here is a 429-residue protein sequence, read N- to C-terminus: 4-hydroxy-3-methylbut-2-en-1-yl diphosphate synthase (flavodoxin) (429 aa).

The [4Fe-4S] cluster site is built by Cys-323, Cys-326, Cys-369, and Glu-376.

Belongs to the IspG family. Requires [4Fe-4S] cluster as cofactor.

It catalyses the reaction (2E)-4-hydroxy-3-methylbut-2-enyl diphosphate + oxidized [flavodoxin] + H2O + 2 H(+) = 2-C-methyl-D-erythritol 2,4-cyclic diphosphate + reduced [flavodoxin]. It participates in isoprenoid biosynthesis; isopentenyl diphosphate biosynthesis via DXP pathway; isopentenyl diphosphate from 1-deoxy-D-xylulose 5-phosphate: step 5/6. Its function is as follows. Converts 2C-methyl-D-erythritol 2,4-cyclodiphosphate (ME-2,4cPP) into 1-hydroxy-2-methyl-2-(E)-butenyl 4-diphosphate. The protein is 4-hydroxy-3-methylbut-2-en-1-yl diphosphate synthase (flavodoxin) of Wolbachia sp. subsp. Brugia malayi (strain TRS).